We begin with the raw amino-acid sequence, 213 residues long: Kiwellin (213 aa).

Residues 1-24 form the signal peptide; that stretch reads MAQLALLLLSLFLTLISLAPPGAS. Cystine bridges form between Cys28-Cys60, Cys32-Cys44, and Cys38-Cys49. Residues Pro65 and Pro67 each carry the 4-hydroxyproline modification. Cystine bridges form between Cys72–Cys90, Cys80–Cys172, Cys119–Cys144, and Cys166–Cys172. The segment at 91 to 121 is disordered; that stretch reads SPPVTSSTPAKLTNNDFSEGGDDGGPSECDE. Over residues 93–107 the composition is skewed to polar residues; it reads PVTSSTPAKLTNNDF.

The protein belongs to the kiwellin family. In terms of processing, undergoes proteolytic cleavage by actinidin to produce kissper and KiTH. Three forms of KiTH are produced by cleavage at different sites, the main form produced in vivo is KiTH-1.

Its subcellular location is the secreted. In terms of biological role, pH-dependent, voltage-gated and anion-selective pore-forming peptide. This is Kiwellin from Actinidia deliciosa (Kiwi).